A 212-amino-acid polypeptide reads, in one-letter code: Large ribosomal subunit protein uL3 (212 aa).

Over residues 136 to 155 the composition is skewed to polar residues; that stretch reads THGNSLSHRSNGSIGQNQTP. The interval 136-157 is disordered; the sequence is THGNSLSHRSNGSIGQNQTPGR. At glutamine 153 the chain carries N5-methylglutamine.

Belongs to the universal ribosomal protein uL3 family. In terms of assembly, part of the 50S ribosomal subunit. Forms a cluster with proteins L14 and L19. In terms of processing, methylated by PrmB.

In terms of biological role, one of the primary rRNA binding proteins, it binds directly near the 3'-end of the 23S rRNA, where it nucleates assembly of the 50S subunit. The sequence is that of Large ribosomal subunit protein uL3 from Shewanella putrefaciens (strain CN-32 / ATCC BAA-453).